A 149-amino-acid polypeptide reads, in one-letter code: ATP synthase epsilon chain (149 aa).

Composition is skewed to basic and acidic residues over residues 99–116 (DVER…RLEE) and 123–134 (RETHEAARDRAR). The tract at residues 99 to 149 (DVERAESAEERAKRRLEEGVQEEERETHEAARDRARNRLRVAMGKVGTRQS) is disordered.

This sequence belongs to the ATPase epsilon chain family. As to quaternary structure, F-type ATPases have 2 components, CF(1) - the catalytic core - and CF(0) - the membrane proton channel. CF(1) has five subunits: alpha(3), beta(3), gamma(1), delta(1), epsilon(1). CF(0) has three main subunits: a, b and c.

It is found in the cell inner membrane. Produces ATP from ADP in the presence of a proton gradient across the membrane. The chain is ATP synthase epsilon chain from Salinibacter ruber (strain DSM 13855 / M31).